The chain runs to 557 residues: Dihydroxy-acid dehydratase (557 aa).

Asp-78 provides a ligand contact to Mg(2+). Cys-119 lines the [2Fe-2S] cluster pocket. The Mg(2+) site is built by Asp-120 and Lys-121. Position 121 is an N6-carboxylysine (Lys-121). [2Fe-2S] cluster is bound at residue Cys-192. Glu-442 lines the Mg(2+) pocket. Residue Ser-468 is the Proton acceptor of the active site.

The protein belongs to the IlvD/Edd family. As to quaternary structure, homodimer. [2Fe-2S] cluster serves as cofactor. Mg(2+) is required as a cofactor.

The catalysed reaction is (2R)-2,3-dihydroxy-3-methylbutanoate = 3-methyl-2-oxobutanoate + H2O. It catalyses the reaction (2R,3R)-2,3-dihydroxy-3-methylpentanoate = (S)-3-methyl-2-oxopentanoate + H2O. Its pathway is amino-acid biosynthesis; L-isoleucine biosynthesis; L-isoleucine from 2-oxobutanoate: step 3/4. The protein operates within amino-acid biosynthesis; L-valine biosynthesis; L-valine from pyruvate: step 3/4. In terms of biological role, functions in the biosynthesis of branched-chain amino acids. Catalyzes the dehydration of (2R,3R)-2,3-dihydroxy-3-methylpentanoate (2,3-dihydroxy-3-methylvalerate) into 2-oxo-3-methylpentanoate (2-oxo-3-methylvalerate) and of (2R)-2,3-dihydroxy-3-methylbutanoate (2,3-dihydroxyisovalerate) into 2-oxo-3-methylbutanoate (2-oxoisovalerate), the penultimate precursor to L-isoleucine and L-valine, respectively. The protein is Dihydroxy-acid dehydratase of Bacillus cereus (strain AH820).